We begin with the raw amino-acid sequence, 437 residues long: uncharacterized protein (437 aa).

A helical transmembrane segment spans residues Leu47–Ala67.

It localises to the membrane. This is an uncharacterized protein from Methanocaldococcus jannaschii (strain ATCC 43067 / DSM 2661 / JAL-1 / JCM 10045 / NBRC 100440) (Methanococcus jannaschii).